Consider the following 134-residue polypeptide: Retinoid-binding protein 7 (134 aa).

The protein belongs to the calycin superfamily. Fatty-acid binding protein (FABP) family. Expressed primarily in kidney, heart and transverse colon. Detected in adult lymph node, appendix, ascending colon, and in fetal heart and spleen.

The protein resides in the cytoplasm. Its function is as follows. Intracellular transport of retinol. This chain is Retinoid-binding protein 7 (RBP7), found in Homo sapiens (Human).